Reading from the N-terminus, the 130-residue chain is Protein ApaG (130 aa).

Positions 3–127 constitute an ApaG domain; sequence RAITRNIQVT…FSLDVPDVRR (125 aa).

This is Protein ApaG from Xanthobacter autotrophicus (strain ATCC BAA-1158 / Py2).